The following is a 140-amino-acid chain: ATP synthase epsilon chain (140 aa).

The protein belongs to the ATPase epsilon chain family. As to quaternary structure, F-type ATPases have 2 components, CF(1) - the catalytic core - and CF(0) - the membrane proton channel. CF(1) has five subunits: alpha(3), beta(3), gamma(1), delta(1), epsilon(1). CF(0) has three main subunits: a, b and c.

Its subcellular location is the cell inner membrane. Its function is as follows. Produces ATP from ADP in the presence of a proton gradient across the membrane. The polypeptide is ATP synthase epsilon chain (Vibrio parahaemolyticus serotype O3:K6 (strain RIMD 2210633)).